Consider the following 673-residue polypeptide: MGYQHNRSFNKATGAGFIIAMGIVYGDIGTSPLYTMESIVQGQGGLERISETSIIGALSLIIWTLTLITTVKYVWIALKADNNHEGGVFSLFTLVRKYAKWLIIPAMIGGAALLSDGALTPAVTVTSAIEGLRSIPAFHEAFGQQQLPIVIITLAILAILFLIQRFGTSIVGKVFGPVMFIWFSFLGITGLINLFGDFSVLQAINPYWAIHLLLSPENKAGIFVLGSVFLATTGAEALYSDLGHVGRGNIHVSWPFVKVCIILSYCGQAAWLLQNRGKSLGDINPFFAVLPQSLIIFSVVLATLAAIIASQALISGSFTLVSEAIRLKLLPRLKINYPGETFGQLYIPAVNLGLWLAASFIVVYFQSSAHMEAAYGLAITVTMLMTTILLTVYLAQHQKVKKVFVVLFFGAFIFIEGLFFAASAVKFLHGGYVVVILAALILFVMAIWHKSDQLFYKYLKSSNLNDYKEQMNKLRKDESYDLYHTNVVYLTAKMDKEWIDRSILYSILDKRPKKAEVYWFVKVNVTDEPYTSEYEVDMLGTDFIVCVNLYLGFHMRQEIPRYLRTIVTNLMESGRLPQQHQPYSIIPGRKVGDFRFILLEEKLINARQMPAFERFVLQTKEQIKKITASPARWFGLHFSEVTVETVPLVLSDVRNLEIHERISKENEVENLSK.

Helical transmembrane passes span 14 to 34 (GAGF…SPLY), 58 to 78 (LSLI…WIAL), 101 to 121 (WLII…ALTP), 147 to 167 (LPIV…QRFG), 175 to 195 (FGPV…INLF), 196 to 216 (GDFS…LLSP), 220 to 240 (AGIF…ALYS), 252 to 272 (VSWP…AAWL), 294 to 314 (LIIF…QALI), 345 to 365 (LYIP…VVYF), 374 to 394 (AYGL…TVYL), 403 to 423 (VFVV…FAAS), and 427 to 447 (FLHG…VMAI).

It belongs to the HAK/KUP transporter (TC 2.A.72) family.

The protein resides in the cell membrane. It carries out the reaction K(+)(in) + H(+)(in) = K(+)(out) + H(+)(out). Functionally, transport of potassium into the cell. Likely operates as a K(+):H(+) symporter. The sequence is that of Putative potassium transport system protein Kup 1 from Lactococcus lactis subsp. cremoris (strain MG1363).